Here is a 61-residue protein sequence, read N- to C-terminus: Large ribosomal subunit protein bL32 (61 aa).

This sequence belongs to the bacterial ribosomal protein bL32 family.

This is Large ribosomal subunit protein bL32 from Cytophaga hutchinsonii (strain ATCC 33406 / DSM 1761 / CIP 103989 / NBRC 15051 / NCIMB 9469 / D465).